The chain runs to 300 residues: Uricase (300 aa).

N-acetylalanine is present on Ala-2. Lys-6 and Lys-19 each carry N6-acetyllysine; alternate. N6-succinyllysine; alternate is present on residues Lys-6 and Lys-19. The active-site Charge relay system is Lys-19. An N6-acetyllysine mark is found at Lys-23 and Lys-32. Phosphoserine occurs at positions 35 and 59. The active-site Charge relay system is the Thr-64. The urate site is built by Thr-64 and Asp-65. N6-acetyllysine occurs at positions 114, 118, and 160. Phe-166 provides a ligand contact to urate. Lys-171 and Lys-181 each carry N6-acetyllysine. Arg-183 serves as a coordination point for urate. Lys-217 and Lys-224 each carry N6-acetyllysine; alternate. 2 positions are modified to N6-succinyllysine; alternate: Lys-217 and Lys-224. Ser-228 carries the phosphoserine modification. Urate-binding residues include Val-231, Gln-232, and Asn-258. His-260 (charge relay system) is an active-site residue. Lys-274 carries the post-translational modification N6-acetyllysine. Tyr-285 is modified (phosphotyrosine). Residues 298 to 300 (SRL) carry the Microbody targeting signal motif.

Belongs to the uricase family.

The protein localises to the peroxisome. It catalyses the reaction urate + O2 + H2O = 5-hydroxyisourate + H2O2. The protein operates within purine metabolism; urate degradation; (S)-allantoin from urate: step 1/3. Functionally, catalyzes the oxidation of uric acid to 5-hydroxyisourate, which is further processed to form (S)-allantoin. The protein is Uricase (UOX) of Oryctolagus cuniculus (Rabbit).